Consider the following 145-residue polypeptide: Protein BUD31 homolog 1 (145 aa).

Belongs to the BUD31 (G10) family.

It is found in the nucleus. The chain is Protein BUD31 homolog 1 from Oryza sativa subsp. japonica (Rice).